The primary structure comprises 856 residues: V-type proton ATPase 116 kDa subunit a 2 (856 aa).

Topologically, residues 1–393 (MGSLFRSESM…DAYGVGSYRE (393 aa)) are cytoplasmic. A helical transmembrane segment spans residues 394–412 (VNPALFTIITFPFLFAVMF). Residues 413–414 (GD) lie on the Vacuolar side of the membrane. A helical membrane pass occupies residues 415-431 (FGHGFVMFLFALLLVLN). The Cytoplasmic segment spans residues 432–445 (ENHPRLSQSQEILR). Residues 446–475 (MFFDGRYILLLMGLFSVYTGLIYNDCFSKS) form a helical membrane-spanning segment. Topologically, residues 476–549 (VNLFGSGWNV…ATNRLTFLNS (74 aa)) are vacuolar. Residues 550–569 (FKMKMSVILGIFHMTFGVVL) traverse the membrane as a helical segment. The Cytoplasmic portion of the chain corresponds to 570 to 587 (GIFNHLHFRKKFNVYLVS). Residues 588–608 (VPEILFMLCIFGYLIFMIIYK) form a helical membrane-spanning segment. The Vacuolar portion of the chain corresponds to 609-651 (WLAYSAETSREAPSILIEFINMFLFPTSKTHGLYPGQAHVQRV). Residues 652-671 (LVALTVLAVPVLFLGKPLFL) traverse the membrane as a helical segment. The Cytoplasmic portion of the chain corresponds to 672–739 (LWLHNGRNCF…EILMTQAIHS (68 aa)). A phosphoserine mark is found at serine 695 and serine 700. The helical transmembrane segment at 740-764 (IEYCLGCISNTASYLRLWALSLAHA) threads the bilayer. Residues 765–785 (QLSDVLWAMLMRVGLRVDTTY) are Vacuolar-facing. A helical membrane pass occupies residues 786 to 824 (GVLLLLPVMAFFAVLTIFILLVMEGLSAFLHAIRLHWVE). At 825–856 (FQNKFYVGAGTKFVPFSFSLLSSKFSNDDSIA) the chain is on the cytoplasmic side.

It belongs to the V-ATPase 116 kDa subunit family. In terms of assembly, V-ATPase is a heteromultimeric enzyme made up of two complexes: the ATP-hydrolytic V1 complex and the proton translocation V0 complex. The V1 complex consists of three catalytic AB heterodimers that form a heterohexamer, three peripheral stalks each consisting of EG heterodimers, one central rotor including subunits D and F, and the regulatory subunits C and H. The proton translocation complex V0 consists of the proton transport subunit a, a ring of proteolipid subunits c9c'', rotary subunit d, subunits e and f, and the accessory subunits ATP6AP1/Ac45 and ATP6AP2/PRR. Directly interacts with PSCD2 through its N-terminal cytosolic tail in an intra-endosomal acidification-dependent manner. Disruption of this interaction results in the inhibition of endocytosis. Interacts with SPAAR. Relatively high expression in kidney and liver. Lower levels in the spleen, testis, and skeletal muscle. Also expressed in the thymus.

The protein localises to the cell membrane. The protein resides in the endosome membrane. In terms of biological role, subunit of the V0 complex of vacuolar(H+)-ATPase (V-ATPase), a multisubunit enzyme composed of a peripheral complex (V1) that hydrolyzes ATP and a membrane integral complex (V0) that translocates protons. V-ATPase is responsible for acidifying and maintaining the pH of intracellular compartments and in some cell types, is targeted to the plasma membrane, where it is responsible for acidifying the extracellular environment. Essential component of the endosomal pH-sensing machinery. May play a role in maintaining the Golgi functions, such as glycosylation maturation, by controlling the Golgi pH. In aerobic conditions, involved in intracellular iron homeostasis, thus triggering the activity of Fe(2+) prolyl hydroxylase (PHD) enzymes, and leading to HIF1A hydroxylation and subsequent proteasomal degradation. The sequence is that of V-type proton ATPase 116 kDa subunit a 2 (Atp6v0a2) from Mus musculus (Mouse).